Reading from the N-terminus, the 3414-residue chain is Hemocyanin 1 (3414 aa).

A signal peptide spans 1–16; that stretch reads MLSVRLLIVVLALANA. Position 17 (E17) interacts with a divalent metal cation. Residues 17–437 form a functional unit a (wall) region; the sequence is ENLVRKSVEH…PPVKHHQSAN (421 aa). H58 contacts Cu cation. C64 and C73 are oxidised to a cystine. Positions 74 to 76 form a cross-link, 2'-(S-cysteinyl)-histidine (Cys-His); the sequence is CIH. Cu cation is bound by residues H76, H85, H195, H199, and H226. A disulfide bridge links C185 with C252. Residues 287 to 290 constitute a cross-link (2'-(S-cysteinyl)-histidine (Cys-His)); the sequence is CELH. C339 and C351 form a disulfide bridge. Residue N403 is glycosylated (N-linked (GlcNAc...) asparagine). A functional unit b (wall) region spans residues 438 to 851; the sequence is LLVRKNINDL…RVKFDKVPRS (414 aa). H478 contacts Cu cation. An intrachain disulfide couples C484 to C495. The segment at residues 496–498 is a cross-link (2'-(S-cysteinyl)-histidine (Cys-His)); that stretch reads CVH. Cu cation is bound by residues H498 and H507. N545 carries an N-linked (GlcNAc...) asparagine glycan. C608 and C674 are disulfide-bonded. H618, H622, and H649 together coordinate Cu cation. A WD 1 repeat occupies 628-669; the sequence is SEHFSMSSLHYTAFDPLFYFHHSNVDRLWAVWQALQMRRHKP. E737 provides a ligand contact to a divalent metal cation. A functional unit c (wall) region spans residues 852–1271; that stretch reads RLIRKNVDRL…EVYQAEVTSA (420 aa). A Cu cation-binding site is contributed by H892. An intrachain disulfide couples C898 to C909. A cross-link (2'-(S-cysteinyl)-histidine (Cys-His)) is located at residues 910–912; sequence CVH. H912, H921, H1031, H1035, and H1062 together coordinate Cu cation. 2 disulfides stabilise this stretch: C1021–C1088 and C1178–C1184. Residues 1041 to 1082 form a WD 2 repeat; the sequence is AQPYGMASLRYTAFDPLFYLHHSNTDRIWAIWQALQKYRGKP. Residues 1272–1680 form a functional unit d (wall) region; that stretch reads NRIRKNIENL…AHTDDGHTEP (409 aa). H1309 lines the Cu cation pocket. Residues C1315 and C1324 are joined by a disulfide bond. A cross-link (2'-(S-cysteinyl)-histidine (Cys-His)) is located at residues 1325-1327; it reads CVH. Residues H1327, H1336, H1440, H1444, and H1471 each contribute to the Cu cation site. 2 disulfide bridges follow: C1430-C1497 and C1585-C1595. Residues 1450 to 1491 form a WD 3 repeat; it reads KGKYSMSNLDYAAFDPVFFLHHATTDRIWAIWQDLQRFRKRP. The N-linked (GlcNAc...) asparagine glycan is linked to N1648. The functional unit e (wall) stretch occupies residues 1681–2097; the sequence is VMIRKDITQL…HDISSHHLSL (417 aa). Cu cation is bound at residue H1721. A disulfide bridge connects residues C1727 and C1738. A cross-link (2'-(S-cysteinyl)-histidine (Cys-His)) is located at residues 1739–1741; sequence CVH. The Cu cation site is built by H1741, H1750, H1863, H1867, and H1894. Cystine bridges form between C1853–C1920 and C2009–C2015. One copy of the WD 4 repeat lies at 1873 to 1914; that stretch reads KEPYGIGHLHYASYDPLFYIHHSQTDRIWAIWQSLQRFRGLS. Residues 2098 to 2517 form a functional unit f (wall) region; it reads NKVRHDLSTL…EDHHSSSMAG (420 aa). Cu cation is bound at residue H2138. A disulfide bridge connects residues C2144 and C2154. N-linked (GlcNAc...) asparagine glycosylation occurs at N2145. Positions 2155 to 2157 form a cross-link, 2'-(S-cysteinyl)-histidine (Cys-His); sequence CIH. Cu cation contacts are provided by H2157, H2166, H2276, H2280, and H2307. The stretch at 2163–2199 is one WD 5 repeat; that stretch reads PHWHRLYTLQFEQALRRHGSSVAVPYWDWTKPIHNIP. 2 cysteine pairs are disulfide-bonded: C2266–C2333 and C2420–C2426. E2424 is an a divalent metal cation binding site. The segment at 2518 to 2921 is functional unit g (internal arc); it reads HGVRKEINTL…EKHHEDHHED (404 aa). Position 2558 (H2558) interacts with Cu cation. Cysteines 2564 and 2574 form a disulfide. A glycan (N-linked (GlcNAc...) asparagine) is linked at N2571. The segment at residues 2575-2577 is a cross-link (2'-(S-cysteinyl)-histidine (Cys-His)); the sequence is CTH. 5 residues coordinate Cu cation: H2577, H2586, H2686, H2690, and H2717. 2 cysteine pairs are disulfide-bonded: C2676/C2743 and C2830/C2836. A WD 6 repeat occupies 2696 to 2737; the sequence is LTPYGMSTLEYTTYDPLFWLHHANTDRIWAIWQALQEYRGLP. Positions 2922-3414 are functional unit h (internal slab); sequence ILVRKNIHSL…LRIHVHVDDE (493 aa). Residue H2962 participates in Cu cation binding. Cysteines 2968 and 2978 form a disulfide. The 2'-(S-cysteinyl)-histidine (Cys-His) cross-link spans 2979 to 2981; it reads CVH. H2981, H2990, H3091, H3095, and H3122 together coordinate Cu cation. The cysteines at positions 3081 and 3148 are disulfide-linked. Residues 3101–3142 form a WD 7 repeat; it reads AEKYSMSTLEYSAFDPYFMIHHASLDKIWIIWQELQKRRVKP. N3278 carries N-linked (GlcNAc...) asparagine glycosylation. A disulfide bridge connects residues C3367 and C3400.

It belongs to the tyrosinase family. Hemocyanin subfamily. As to quaternary structure, homo-didecamer, with two decamers assembled face-to-face at their open ends. This didecamer form a stable 25 nM cylinder wall. Post-translationally, probably N-glycosylated. Asn-1280 and Asn-2484 are buried deeply in the protein which make them inaccessible for sugar attachment. Asn-3278 N-glycan is likely to represent a diantennate carbohydrate tree. The didecamer is almost evenly tagged by a total of 120 sugar trees. As to expression, hemolymph.

The protein localises to the secreted. It is found in the extracellular space. Its function is as follows. Hemocyanins are copper-containing oxygen carriers occurring freely dissolved in the hemolymph of many mollusks and arthropods. The chain is Hemocyanin 1 from Megathura crenulata (Giant keyhole limpet).